The primary structure comprises 348 residues: Glycerol-1-phosphate dehydrogenase [NAD(P)+] (348 aa).

NAD(+) is bound by residues 94-98 (GKVID) and Thr116. Asp121 is a substrate binding site. An NAD(+)-binding site is contributed by Ser125. Asp168 is a substrate binding site. 2 residues coordinate Zn(2+): Asp168 and His248. His252 lines the substrate pocket. His264 serves as a coordination point for Zn(2+).

Belongs to the glycerol-1-phosphate dehydrogenase family. In terms of assembly, homooctamer. It depends on Zn(2+) as a cofactor.

Its subcellular location is the cytoplasm. The catalysed reaction is sn-glycerol 1-phosphate + NAD(+) = dihydroxyacetone phosphate + NADH + H(+). It carries out the reaction sn-glycerol 1-phosphate + NADP(+) = dihydroxyacetone phosphate + NADPH + H(+). Its pathway is membrane lipid metabolism; glycerophospholipid metabolism. Functionally, catalyzes the NAD(P)H-dependent reduction of dihydroxyacetonephosphate (DHAP or glycerone phosphate) to glycerol 1-phosphate (G1P). The G1P thus generated is used as the glycerophosphate backbone of phospholipids in the cellular membranes of Archaea. This Methanosphaera stadtmanae (strain ATCC 43021 / DSM 3091 / JCM 11832 / MCB-3) protein is Glycerol-1-phosphate dehydrogenase [NAD(P)+].